Here is an 82-residue protein sequence, read N- to C-terminus: Small ribosomal subunit protein bS16 (82 aa).

It belongs to the bacterial ribosomal protein bS16 family.

This is Small ribosomal subunit protein bS16 from Shigella boydii serotype 18 (strain CDC 3083-94 / BS512).